A 67-amino-acid polypeptide reads, in one-letter code: DNA-directed RNA polymerase subunit omega (67 aa).

This sequence belongs to the RNA polymerase subunit omega family. In terms of assembly, the RNAP catalytic core consists of 2 alpha, 1 beta, 1 beta' and 1 omega subunit. When a sigma factor is associated with the core the holoenzyme is formed, which can initiate transcription.

The catalysed reaction is RNA(n) + a ribonucleoside 5'-triphosphate = RNA(n+1) + diphosphate. Functionally, promotes RNA polymerase assembly. Latches the N- and C-terminal regions of the beta' subunit thereby facilitating its interaction with the beta and alpha subunits. In Legionella pneumophila (strain Paris), this protein is DNA-directed RNA polymerase subunit omega.